The chain runs to 231 residues: Regulatory protein VanR (231 aa).

Residues 4–117 form the Response regulatory domain; it reads KILIVDDEHE…ELIARVKAQL (114 aa). The residue at position 53 (Asp-53) is a 4-aspartylphosphate. A DNA-binding region (ompR/PhoB-type) is located at residues 131–231; sequence ENVIVHSGLV…VWGVGYKIEK (101 aa).

In terms of assembly, monomer. In terms of processing, phosphorylated by VanS. Dephosphorylated by VanS. Can be phosphorylated nonenzymatically by acetyl-phosphate.

The protein resides in the cytoplasm. Member of the two-component regulatory system VanS/VanR. Binds to the promoter regions of target genes, including vanH and vanR; phosphorylation of VanR increases binding affinity to the vanH and vanR promoters significantly. DNA binding may be inhibited by the cognate sensor protein, VanS. Activates the transcription of vanH, vanA and vanX in response to vancomycin which results in vancomycin resistance. Involved in conferring vancomycin resistance. This is Regulatory protein VanR (vanR) from Enterococcus faecium (Streptococcus faecium).